Reading from the N-terminus, the 163-residue chain is Type-1 angiotensin II receptor-associated protein-like (163 aa).

Residues 1–28 are Extracellular-facing; the sequence is MELPAVNLKAIVFTHWLLTVFACMIDWL. A helical transmembrane segment spans residues 29 to 49; it reads PKAYGLANITILAMGVWAIAQ. Residues 50 to 55 are Cytoplasmic-facing; that stretch reads RDSIDA. A helical transmembrane segment spans residues 56 to 76; that stretch reads IFMFLIGLLLTILTDILLFAL. At 77 to 95 the chain is on the extracellular side; sequence YFTEAEKASESGPLRDLFR. Residues 96–116 traverse the membrane as a helical segment; that stretch reads FSSGMGIFSLLLKPLSCFFMY. Over 117 to 163 the chain is Cytoplasmic; the sequence is HMYRERGGEYFVNLGFITLSRDRSSYQSIEHMDPPADQDNKLPSRTY.

Its subcellular location is the membrane. Its function is as follows. Appears to be a negative regulator of angiotensin II type I receptor-mediated signaling. The polypeptide is Type-1 angiotensin II receptor-associated protein-like (agtrap) (Xenopus tropicalis (Western clawed frog)).